The sequence spans 568 residues: 2-succinyl-5-enolpyruvyl-6-hydroxy-3-cyclohexene-1-carboxylate synthase (568 aa).

It belongs to the TPP enzyme family. MenD subfamily. In terms of assembly, homodimer. Mg(2+) serves as cofactor. Requires Mn(2+) as cofactor. Thiamine diphosphate is required as a cofactor.

The enzyme catalyses isochorismate + 2-oxoglutarate + H(+) = 5-enolpyruvoyl-6-hydroxy-2-succinyl-cyclohex-3-ene-1-carboxylate + CO2. It participates in quinol/quinone metabolism; 1,4-dihydroxy-2-naphthoate biosynthesis; 1,4-dihydroxy-2-naphthoate from chorismate: step 2/7. The protein operates within quinol/quinone metabolism; menaquinone biosynthesis. Catalyzes the thiamine diphosphate-dependent decarboxylation of 2-oxoglutarate and the subsequent addition of the resulting succinic semialdehyde-thiamine pyrophosphate anion to isochorismate to yield 2-succinyl-5-enolpyruvyl-6-hydroxy-3-cyclohexene-1-carboxylate (SEPHCHC). The sequence is that of 2-succinyl-5-enolpyruvyl-6-hydroxy-3-cyclohexene-1-carboxylate synthase from Histophilus somni (strain 2336) (Haemophilus somnus).